Here is a 406-residue protein sequence, read N- to C-terminus: uncharacterized protein (406 aa).

5 helical membrane passes run 7 to 27 (LCTN…YYLF), 31 to 51 (YFNI…YGSV), 65 to 85 (LIFI…SEII), 92 to 112 (IFYF…SFIL), and 191 to 211 (ISLI…SSFF). Positions 259 to 331 (TLNVPISTNN…TGTNNNVVDN (73 aa)) are disordered. Positions 262-291 (VPISTNNTDNLNSVKTNQQFNTPVAKSNTK) are enriched in polar residues. Positions 292–303 (SNRRKKTGKKIR) are enriched in basic residues. The segment covering 306-318 (NQTTSSNSSNNQS) has biased composition (low complexity). The span at 319 to 330 (PESTGTNNNVVD) shows a compositional bias: polar residues.

It is found in the membrane. This is an uncharacterized protein from Acanthamoeba polyphaga (Amoeba).